The following is a 919-amino-acid chain: MTAEETVNVKEVEIIKLILDFLNSKKLHISMLALEKESGVINGLFSDDMLFLRQLILDGQWDEVLQFIQPLECMEKFDKKRFRYIILKQKFLEALCVNNAMSAEDEPQHLEFTMQEAVQCLHALEEYCPSKDDYSKLCLLLTLPRLTNHAEFKDWNPSTARVHCFEEACVMVAEFIPADRKLSEAGFKASNNRLFQLVMKGLLYECCVEFCQSKATGEEITESEVLLGIDLLCGNGCDDLDLSLLSWLQNLPSSVFSCAFEQKMLNIHVDKLLKPTKAAYADLLTPLISKLSPYPSSPMRRPQSADAYMTRSLNPALDGLTCGLTSHDKRISDLGNKTSPMSHSFANFHYPGVQNLSRSLMLENTECHSIYEESPERDTPVDAQRPIGSEILGQSSVSEKEPANGAQNPGPAKQEKNELRDSTEQFQEYYRQRLRYQQHLEQKEQQRQIYQQMLLEGGVNQEDGPDQQQNLTEQFLNRSIQKLGELNIGMDGLGNEVSALNQQCNGSKGNGSNGSSVTSFTTPPQDSSQRLTHDASNIHTSTPRNPGSTNHIPFLEESPCGSQISSEHSVIKPPLGDSPGSLSRSKGEEDDKSKKQFVCINILEDTQAVRAVAFHPAGGLYAVGSNSKTLRVCAYPDVIDPSAHETPKQPVVRFKRNKHHKGSIYCVAWSPCGQLLATGSNDKYVKVLPFNAETCNATGPDLEFSMHDGTIRDLAFMEGPESGGAILISAGAGDCNIYTTDCQRGQGLHALSGHTGHILALYTWSGWMIASGSQDKTVRFWDLRVPSCVRVVGTTFHGTGSAVASVAVDPSGRLLATGQEDSSCMLYDIRGGRMVQSYHPHSSDVRSVRFSPGAHYLLTGSYDMKIKVTDLQGDLTKQLPIMVVGEHKDKVIQCRWHTQDLSFLSSSADRTVTLWTYNG.

The LisH domain maps to lysine 10 to asparagine 42. A CTLH domain is found at phenylalanine 45 to serine 102. Residue threonine 285 is modified to Phosphothreonine. 4 positions are modified to phosphoserine: serine 289, serine 292, serine 297, and serine 312. The tract at residues glycine 393–aspartate 421 is disordered. Serine 422 bears the Phosphoserine mark. A disordered region spans residues leucine 500–aspartate 590. The segment covering valine 517–histidine 551 has biased composition (polar residues). Threonine 542 bears the Phosphothreonine mark. 7 WD repeats span residues glutamate 604 to alanine 643, histidine 659 to threonine 698, methionine 706 to leucine 748, glycine 753 to valine 791, glycine 798 to serine 837, proline 840 to leucine 879, and glutamate 886 to asparagine 918.

Interacts with MAP1S (via WD repeats).

It is found in the cytoplasm. The protein resides in the cytoskeleton. The sequence is that of WD repeat-containing protein 47 (WDR47) from Homo sapiens (Human).